The chain runs to 108 residues: MYAVFISGGKQYRVVKNQIIRLEKLNSPLGTTIEFDKILMLFDKDSIKIGTPFVEGGTIKAHIQNHGRLKKIKIIKFNRRKHYKKQQGHRQYFTDVKIIDINSIKGEV.

This sequence belongs to the bacterial ribosomal protein bL21 family. In terms of assembly, part of the 50S ribosomal subunit. Contacts protein L20.

This protein binds to 23S rRNA in the presence of protein L20. This chain is Large ribosomal subunit protein bL21, found in Buchnera aphidicola subsp. Acyrthosiphon pisum (strain 5A).